Reading from the N-terminus, the 393-residue chain is 4-hydroxyphenylpyruvate dioxygenase (393 aa).

VOC domains lie at 17 to 148 (AFDH…LLER) and 179 to 339 (FLDH…IFSK). Fe cation contacts are provided by histidine 182, histidine 267, and glutamate 350.

The protein belongs to the 4HPPD family. Fe cation is required as a cofactor. As to expression, expressed in the hypodermis and intestine.

The catalysed reaction is 3-(4-hydroxyphenyl)pyruvate + O2 = homogentisate + CO2. Its pathway is amino-acid degradation; L-phenylalanine degradation; acetoacetate and fumarate from L-phenylalanine: step 3/6. Its function is as follows. Key enzyme in the degradation of tyrosine. This chain is 4-hydroxyphenylpyruvate dioxygenase, found in Caenorhabditis elegans.